The following is a 292-amino-acid chain: Pyridoxal 5'-phosphate synthase subunit PdxS (292 aa).

D-ribose 5-phosphate is bound at residue Asp-22. The Schiff-base intermediate with D-ribose 5-phosphate role is filled by Lys-79. Residue Gly-151 participates in D-ribose 5-phosphate binding. Arg-163 contacts D-glyceraldehyde 3-phosphate. D-ribose 5-phosphate-binding positions include Gly-212 and 233 to 234 (GS).

Belongs to the PdxS/SNZ family. As to quaternary structure, in the presence of PdxT, forms a dodecamer of heterodimers.

The enzyme catalyses aldehydo-D-ribose 5-phosphate + D-glyceraldehyde 3-phosphate + L-glutamine = pyridoxal 5'-phosphate + L-glutamate + phosphate + 3 H2O + H(+). It participates in cofactor biosynthesis; pyridoxal 5'-phosphate biosynthesis. Its function is as follows. Catalyzes the formation of pyridoxal 5'-phosphate from ribose 5-phosphate (RBP), glyceraldehyde 3-phosphate (G3P) and ammonia. The ammonia is provided by the PdxT subunit. Can also use ribulose 5-phosphate and dihydroxyacetone phosphate as substrates, resulting from enzyme-catalyzed isomerization of RBP and G3P, respectively. The protein is Pyridoxal 5'-phosphate synthase subunit PdxS of Caldanaerobacter subterraneus subsp. tengcongensis (strain DSM 15242 / JCM 11007 / NBRC 100824 / MB4) (Thermoanaerobacter tengcongensis).